We begin with the raw amino-acid sequence, 333 residues long: Adenosine deaminase (333 aa).

His-12 and His-14 together coordinate Zn(2+). Substrate-binding residues include His-14, Asp-16, and Gly-170. His-197 contributes to the Zn(2+) binding site. Glu-200 acts as the Proton donor in catalysis. A Zn(2+)-binding site is contributed by Asp-278. Asp-279 is a binding site for substrate.

The protein belongs to the metallo-dependent hydrolases superfamily. Adenosine and AMP deaminases family. Adenosine deaminase subfamily. The cofactor is Zn(2+).

It catalyses the reaction adenosine + H2O + H(+) = inosine + NH4(+). The enzyme catalyses 2'-deoxyadenosine + H2O + H(+) = 2'-deoxyinosine + NH4(+). Functionally, catalyzes the hydrolytic deamination of adenosine and 2-deoxyadenosine. This Shigella boydii serotype 4 (strain Sb227) protein is Adenosine deaminase.